A 309-amino-acid chain; its full sequence is Voltage-dependent anion channel-forming protein mll4386 (309 aa).

3 consecutive transmembrane segments (helical) span residues 32–52 (ILPQIFGFAVYSAVILALARW), 58–78 (GVFNITPFGLVGVTLSIYLSF), and 227–247 (IVCLLLPIGLISTTGWATPLF).

The protein belongs to the anion channel-forming bestrophin (TC 1.A.46) family.

The protein resides in the cell membrane. In Mesorhizobium japonicum (strain LMG 29417 / CECT 9101 / MAFF 303099) (Mesorhizobium loti (strain MAFF 303099)), this protein is Voltage-dependent anion channel-forming protein mll4386.